The following is a 445-amino-acid chain: MAIKIRKLDSTSEGFAAELRAVLAFEASEDDAIERAVAQILADVKARGDAAVLDYTNRFDRLNAASVAALELPQSELEAALEGLEPKRRAALEAAAARVRGYHEKQKIECGSHSWQYTEADGTVLGQKVTPLDRVGLYVPGGKAAYPSSVLMNAIPARVAGVGEIVMVVPTPDGLKNDLVLAAALLGGVDRVFTIGGAQAVAALAYGTQTVPAVDKICGPGNAYVASAKRRVFGTVGIDMIAGPSEILVLCDGTTDPSWVAMDLFSQAEHDELAQSILLCPDEAFIERVEKAIGELLPTMPRQDVIRASLEGRGALVKVRDMAEACRIANDIAPEHLEISALEPHQWGKQIRHAGAIFLGRYTSESLGDYCAGPNHVLPTSRTARFSSPLGVYDFFKRSSLIEVSAEGAHTLGEIASELAYGEGLQAHAKSAEYRMKGAGDRQKG.

Residues Y138, Q199, and N222 each contribute to the NAD(+) site. The substrate site is built by S245, Q267, and H270. Q267 and H270 together coordinate Zn(2+). Active-site proton acceptor residues include E335 and H336. Residues H336, D369, E423, and H428 each coordinate substrate. D369 provides a ligand contact to Zn(2+). Residue H428 coordinates Zn(2+).

It belongs to the histidinol dehydrogenase family. The cofactor is Zn(2+).

The catalysed reaction is L-histidinol + 2 NAD(+) + H2O = L-histidine + 2 NADH + 3 H(+). It functions in the pathway amino-acid biosynthesis; L-histidine biosynthesis; L-histidine from 5-phospho-alpha-D-ribose 1-diphosphate: step 9/9. In terms of biological role, catalyzes the sequential NAD-dependent oxidations of L-histidinol to L-histidinaldehyde and then to L-histidine. In Burkholderia pseudomallei (strain 1710b), this protein is Histidinol dehydrogenase.